The chain runs to 471 residues: Mixed lineage kinase domain-like protein (471 aa).

Positions Met-1–Gln-149 are N-terminal bundle and brace (NBB); mediates INSP6 binding. Residues Ser-55–Asn-84 are a coiled coil. Position 125 is a phosphoserine (Ser-125). A coiled-coil region spans residues Gln-139–Leu-180. The region spanning Lys-194–Phe-469 is the Protein kinase domain. Residues Leu-209–Leu-217 and Lys-230 contribute to the ATP site. Thr-357 is modified (phosphothreonine; by RIPK3). Phosphoserine; by RIPK3 is present on residues Ser-358 and Ser-360.

This sequence belongs to the protein kinase superfamily. In terms of assembly, homooligomer. Homotrimer; forms homotrimers on necroptosis induction. Upon TNF-induced necrosis, forms in complex with PGAM5, RIPK1 and RIPK3. Within this complex, may play a role in the proper targeting of RIPK1-RIPK3 to its downstream effector PGAM5. Interacts with RIPK3; the interaction is direct and promotes its phosphorylation and subsequent activation. In terms of processing, phosphorylation by RIPK3 induces a conformational switch that is required for necroptosis. It also induces homotrimerization and localization to the plasma membrane.

It is found in the cytoplasm. The protein localises to the cell membrane. It localises to the nucleus. Activated via binding to highly phosphorylated inositol phosphates such as inositolhexakisphosphate (InsP6) which mediates the release of an N-terminal auto-inhibitory region. Activation requires not only RIPK3-dependent phosphorylation but also binding to highly phosphorylated inositol phosphates. Inhibited by necrosulfonamide, a specific inhibitor of necroptosis that targets Cys-86. Its function is as follows. Pseudokinase that plays a key role in TNF-induced necroptosis, a programmed cell death process. Does not have protein kinase activity. Activated following phosphorylation by RIPK3, leading to homotrimerization, localization to the plasma membrane and execution of programmed necrosis characterized by calcium influx and plasma membrane damage. In addition to TNF-induced necroptosis, necroptosis can also take place in the nucleus in response to orthomyxoviruses infection: following activation by ZBP1, MLKL is phosphorylated by RIPK3 in the nucleus, triggering disruption of the nuclear envelope and leakage of cellular DNA into the cytosol.following ZBP1 activation, which senses double-stranded Z-RNA structures, nuclear RIPK3 catalyzes phosphorylation and activation of MLKL, promoting disruption of the nuclear envelope and leakage of cellular DNA into the cytosol. Binds to highly phosphorylated inositol phosphates such as inositolhexakisphosphate (InsP6) which is essential for its necroptotic function. The protein is Mixed lineage kinase domain-like protein of Homo sapiens (Human).